Consider the following 187-residue polypeptide: Pyridoxal 5'-phosphate synthase subunit PdxT (187 aa).

Residue G47–S49 participates in L-glutamine binding. C76 (nucleophile) is an active-site residue. L-glutamine contacts are provided by residues R102 and I128–R129. Residues H165 and E167 each act as charge relay system in the active site.

Belongs to the glutaminase PdxT/SNO family. In terms of assembly, in the presence of PdxS, forms a dodecamer of heterodimers. Only shows activity in the heterodimer.

The catalysed reaction is aldehydo-D-ribose 5-phosphate + D-glyceraldehyde 3-phosphate + L-glutamine = pyridoxal 5'-phosphate + L-glutamate + phosphate + 3 H2O + H(+). The enzyme catalyses L-glutamine + H2O = L-glutamate + NH4(+). The protein operates within cofactor biosynthesis; pyridoxal 5'-phosphate biosynthesis. Functionally, catalyzes the hydrolysis of glutamine to glutamate and ammonia as part of the biosynthesis of pyridoxal 5'-phosphate. The resulting ammonia molecule is channeled to the active site of PdxS. The chain is Pyridoxal 5'-phosphate synthase subunit PdxT from Methanococcus maripaludis (strain DSM 14266 / JCM 13030 / NBRC 101832 / S2 / LL).